Consider the following 709-residue polypeptide: SH3 domain-containing kinase-binding protein 1 (709 aa).

2 SH3 domains span residues 1 to 58 (MVEA…EIKK) and 98 to 157 (RRRR…ELSG). Ser-156, Ser-159, Ser-227, and Ser-274 each carry phosphoserine. Low complexity predominate over residues 221-239 (ETTGSESDGGDSSSTKSEG). Positions 221-242 (ETTGSESDGGDSSSTKSEGANG) are disordered. 3 disordered regions span residues 289 to 309 (GKKL…MDSR), 372 to 485 (SDFD…KIDL), and 511 to 650 (DSVI…VSSQ). Thr-298 is modified (phosphothreonine). Positions 311–372 (KTKDYCKVIF…PDNFVKLLPS (62 aa)) constitute an SH3 3 domain. Residues 399 to 434 (TERKHEIKKIPPERPETLPNRTEEKERPEREPKLDL) show a composition bias toward basic and acidic residues. Ser-480 is modified (phosphoserine). Residues 513–528 (VISSTEKLSHPTTSRP) are compositionally biased toward polar residues. Low complexity predominate over residues 535–554 (PPSQSLTSSSLSSPDIFDSP). Residues Ser-553, Ser-555, and Ser-565 each carry the phosphoserine modification. Positions 561–575 (EEHISLAHRGIDVSK) are enriched in basic and acidic residues. The span at 579 to 592 (KTVTISQVSDNKTS) shows a compositional bias: polar residues. Residues 600 to 623 (MAAASSGPASLSSVASSPMSSSLG) show a composition bias toward low complexity. Over residues 627-636 (QRASSPSLFS) the composition is skewed to polar residues. Residue Ser-631 is modified to Phosphoserine. The stretch at 646–708 (AVSSQAAIEE…VNDIKKALQS (63 aa)) forms a coiled coil.

Can self-associate and form homotetramers. Interacts with CD2, F-actin capping protein, PIK3R3, GRB2, EGFR, MET, BLNK, MAP3K4, PDCD6IP, SPRY2, ARHGAP17, ARHGAP27, CRK, BCAR1, SOS1, ASAP1, ARAP3, HIP1R, SYNJ2, INPP5D and STAP1. Interacts with E3 ubiquitin-protein ligase CBL. Interacts with CBLB, but does not interact with CBLC. Two molecules of SH3KBP1 seem to bind through their respective SH3 1 domain to one molecule of CBLB. The interaction with CBL or CBLB and EGFR is increased upon EGF stimulation. The interaction with CBL is attenuated by PDCD6IP. Interacts (via SH3 domains) with ARAP1. The interaction is independent of EGF and does not affect ARAP1 GTPase-activating activity but is involved in regulating ubiquitination and endocytic trafficking of EGFR. ARAP1 competes with CBL for binding to SH3KBP1 and prevents interaction of CBL with SH3KBP1; this is likely to regulate SH3KBP1-mediated internalization of EGFR. Interacts through its proline-rich region with the SH3 domain of endophilins SH3GL1, SH3GL2 and SH3GL3. The SH3KBP1-endophilin complex seems to associate with a complex containing the phosphorylated receptor (EGFR or MET) and phosphorylated CBL. Probably associates with ASAP1 and phosphorylated EGFR. Probably part of a complex consisting of at least SH3KBP1, ASAP1 and ARAP3. Interacts with focal adhesion kinases PTK2/FAK1 and PTK2B/PYK2, probably as a dimer. Interacts with DAB2 and probably associates with chathrin through its interaction with DAB2. Part of a complex consisting of SH3KBP1, DAB2, and clathrin heavy chain. DAB2 and clathrin dissociate from SH3KBP1 following growth factor treatment, enabling interaction with CBL. Interacts with DDN and probably associates with MAGI2 through its interaction with DDN. Interacts with the SH3 domains of SRC tyrosine-protein kinases SRC, LCK, LYN, FGR, FYN and HCK. Interacts with TRADD, BIRC2, TRAF1, TRAF2 and TNFR1, and the association with a TNFR1-associated complex upon stimulation with TNF-alpha seems to be mediated by SRC. Probably part of a complex consisting of at least SH3KBP1, ASAP1 and ARAP3. Interacts (via SH3 domains) with SHKBP1 (via PXXXPR motifs). Interacts with ATX2. Interaction with CBL is abolished in the presence of SHKBP1. Interacts (via SH3 domains) with ZFP36 (via extreme C-terminal region). Interacts with MAP3K4; this interaction enhances the association with ZFP36. Post-translationally, monoubiquitinated by CBL and CBLB after EGF stimulation; probably on its C-terminus.

It localises to the cytoplasm. Its subcellular location is the cytoskeleton. The protein resides in the cytoplasmic vesicle membrane. The protein localises to the synapse. It is found in the synaptosome. It localises to the cell junction. Its subcellular location is the focal adhesion. Its function is as follows. Adapter protein involved in regulating diverse signal transduction pathways. Involved in the regulation of endocytosis and lysosomal degradation of ligand-induced receptor tyrosine kinases, including EGFR and MET/hepatocyte growth factor receptor, through an association with CBL and endophilins. The association with CBL, and thus the receptor internalization, may be inhibited by an interaction with PDCD6IP and/or SPRY2. Involved in regulation of ligand-dependent endocytosis of the IgE receptor. Attenuates phosphatidylinositol 3-kinase activity by interaction with its regulatory subunit. May be involved in regulation of cell adhesion; promotes the interaction between TTK2B and PDCD6IP. May be involved in the regulation of cellular stress response via the MAPK pathways through its interaction with MAP3K4. Is involved in modulation of tumor necrosis factor mediated apoptosis. Plays a role in the regulation of cell morphology and cytoskeletal organization. Required in the control of cell shape and migration. Has an essential role in the stimulation of B cell activation. This chain is SH3 domain-containing kinase-binding protein 1 (Sh3kbp1), found in Mus musculus (Mouse).